Here is a 353-residue protein sequence, read N- to C-terminus: Photosystem II protein D1 (353 aa).

Position 2 is an N-acetylthreonine (Thr-2). Position 2 is a phosphothreonine (Thr-2). Helical transmembrane passes span 29–46, 118–133, and 142–156; these read YIGWFGVLMIPTLLTATS, HFLLGVACYMGREWEL, and WIAVAYSAPVAAATA. His-118 provides a ligand contact to chlorophyll a. A pheophytin a-binding site is contributed by Tyr-126. The [CaMn4O5] cluster site is built by Asp-170 and Glu-189. A helical transmembrane segment spans residues 197 to 218; that stretch reads FHMLGVAGVFGGSLFSAMHGSL. His-198 is a binding site for chlorophyll a. A quinone is bound by residues His-215 and 264–265; that span reads SF. His-215 lines the Fe cation pocket. His-272 provides a ligand contact to Fe cation. A helical membrane pass occupies residues 274–288; sequence FLAAWPVVGIWFTAL. Residues His-332, Glu-333, Asp-342, and Ala-344 each contribute to the [CaMn4O5] cluster site. The propeptide occupies 345–353; the sequence is AVEVPSTNG.

Belongs to the reaction center PufL/M/PsbA/D family. In terms of assembly, PSII is composed of 1 copy each of membrane proteins PsbA, PsbB, PsbC, PsbD, PsbE, PsbF, PsbH, PsbI, PsbJ, PsbK, PsbL, PsbM, PsbT, PsbX, PsbY, PsbZ, Psb30/Ycf12, at least 3 peripheral proteins of the oxygen-evolving complex and a large number of cofactors. It forms dimeric complexes. Requires The D1/D2 heterodimer binds P680, chlorophylls that are the primary electron donor of PSII, and subsequent electron acceptors. It shares a non-heme iron and each subunit binds pheophytin, quinone, additional chlorophylls, carotenoids and lipids. D1 provides most of the ligands for the Mn4-Ca-O5 cluster of the oxygen-evolving complex (OEC). There is also a Cl(-1) ion associated with D1 and D2, which is required for oxygen evolution. The PSII complex binds additional chlorophylls, carotenoids and specific lipids. as cofactor. Post-translationally, tyr-161 forms a radical intermediate that is referred to as redox-active TyrZ, YZ or Y-Z. In terms of processing, C-terminally processed by CTPA; processing is essential to allow assembly of the oxygen-evolving complex and thus photosynthetic growth.

Its subcellular location is the plastid. It localises to the chloroplast thylakoid membrane. The catalysed reaction is 2 a plastoquinone + 4 hnu + 2 H2O = 2 a plastoquinol + O2. Its function is as follows. Photosystem II (PSII) is a light-driven water:plastoquinone oxidoreductase that uses light energy to abstract electrons from H(2)O, generating O(2) and a proton gradient subsequently used for ATP formation. It consists of a core antenna complex that captures photons, and an electron transfer chain that converts photonic excitation into a charge separation. The D1/D2 (PsbA/PsbD) reaction center heterodimer binds P680, the primary electron donor of PSII as well as several subsequent electron acceptors. The polypeptide is Photosystem II protein D1 (Eucalyptus globulus subsp. globulus (Tasmanian blue gum)).